An 86-amino-acid polypeptide reads, in one-letter code: Putative membrane protein insertion efficiency factor (86 aa).

The protein belongs to the UPF0161 family.

It is found in the cell inner membrane. Its function is as follows. Could be involved in insertion of integral membrane proteins into the membrane. In Pasteurella multocida (strain Pm70), this protein is Putative membrane protein insertion efficiency factor.